We begin with the raw amino-acid sequence, 92 residues long: Protein canopy homolog 1 (92 aa).

The protein belongs to the canopy family.

The sequence is that of Protein canopy homolog 1 (CNPY1) from Homo sapiens (Human).